A 202-amino-acid polypeptide reads, in one-letter code: Recombination protein RecR (202 aa).

The C4-type zinc-finger motif lies at C61 to C76. The 96-residue stretch at G84 to P179 folds into the Toprim domain.

This sequence belongs to the RecR family.

Functionally, may play a role in DNA repair. It seems to be involved in an RecBC-independent recombinational process of DNA repair. It may act with RecF and RecO. This chain is Recombination protein RecR, found in Bordetella pertussis (strain Tohama I / ATCC BAA-589 / NCTC 13251).